The following is a 374-amino-acid chain: Chaperone protein DnaJ (374 aa).

In terms of domain architecture, J spans 4–69 (DFYETLCVSR…QKRAAYDRFG (66 aa)). The CR-type zinc-finger motif lies at 131-210 (GKTAQIRVPT…CSGQGRLTEE (80 aa)). Cys144, Cys147, Cys161, Cys164, Cys184, Cys187, Cys198, and Cys201 together coordinate Zn(2+). CXXCXGXG motif repeat units lie at residues 144–151 (CDECAGSG), 161–168 (CPMCHGAG), 184–191 (CPQCQGRG), and 198–205 (CRKCSGQG).

It belongs to the DnaJ family. As to quaternary structure, homodimer. Zn(2+) is required as a cofactor.

The protein resides in the cytoplasm. Its function is as follows. Participates actively in the response to hyperosmotic and heat shock by preventing the aggregation of stress-denatured proteins and by disaggregating proteins, also in an autonomous, DnaK-independent fashion. Unfolded proteins bind initially to DnaJ; upon interaction with the DnaJ-bound protein, DnaK hydrolyzes its bound ATP, resulting in the formation of a stable complex. GrpE releases ADP from DnaK; ATP binding to DnaK triggers the release of the substrate protein, thus completing the reaction cycle. Several rounds of ATP-dependent interactions between DnaJ, DnaK and GrpE are required for fully efficient folding. Also involved, together with DnaK and GrpE, in the DNA replication of plasmids through activation of initiation proteins. This chain is Chaperone protein DnaJ, found in Chelativorans sp. (strain BNC1).